The sequence spans 296 residues: Ribonuclease HIII (296 aa).

The RNase H type-2 domain occupies 80-296 (LALIGSDEVG…NTKKAYQRLK (217 aa)). Positions 86, 87, and 191 each coordinate a divalent metal cation.

The protein belongs to the RNase HII family. RnhC subfamily. Mn(2+) serves as cofactor. Requires Mg(2+) as cofactor.

The protein resides in the cytoplasm. It carries out the reaction Endonucleolytic cleavage to 5'-phosphomonoester.. Endonuclease that specifically degrades the RNA of RNA-DNA hybrids. The polypeptide is Ribonuclease HIII (Streptococcus thermophilus (strain ATCC BAA-250 / LMG 18311)).